The chain runs to 291 residues: Phosphate import ATP-binding protein PstB (291 aa).

In terms of domain architecture, ABC transporter spans 45–286 (YSTQNLDLWY…PADKQTEDYI (242 aa)). 77 to 84 (GPSGCGKS) contacts ATP.

It belongs to the ABC transporter superfamily. Phosphate importer (TC 3.A.1.7) family. The complex is composed of two ATP-binding proteins (PstB), two transmembrane proteins (PstC and PstA) and a solute-binding protein (PstS).

The protein localises to the cell membrane. It carries out the reaction phosphate(out) + ATP + H2O = ADP + 2 phosphate(in) + H(+). Part of the ABC transporter complex PstSACB involved in phosphate import. Responsible for energy coupling to the transport system. The protein is Phosphate import ATP-binding protein PstB of Staphylococcus epidermidis (strain ATCC 35984 / DSM 28319 / BCRC 17069 / CCUG 31568 / BM 3577 / RP62A).